The primary structure comprises 197 residues: Xanthine phosphoribosyltransferase (197 aa).

L20 and N27 together coordinate xanthine. 128 to 132 (ANGQA) serves as a coordination point for 5-phospho-alpha-D-ribose 1-diphosphate. K156 provides a ligand contact to xanthine.

It belongs to the purine/pyrimidine phosphoribosyltransferase family. Xpt subfamily. In terms of assembly, homodimer.

It is found in the cytoplasm. It carries out the reaction XMP + diphosphate = xanthine + 5-phospho-alpha-D-ribose 1-diphosphate. Its pathway is purine metabolism; XMP biosynthesis via salvage pathway; XMP from xanthine: step 1/1. In terms of biological role, converts the preformed base xanthine, a product of nucleic acid breakdown, to xanthosine 5'-monophosphate (XMP), so it can be reused for RNA or DNA synthesis. The chain is Xanthine phosphoribosyltransferase from Bacillus cereus (strain ATCC 10987 / NRS 248).